The chain runs to 227 residues: MDNFGGNFFNSYSNNSNREVEGNQYFDPYFVKHRKRTTKAQLKVLEETFETNIRPDANMRKKLGEQLGMTPRSVQVWFQNRRAKIKKLTQKKMMQQENTDNTKGPDAAHGSSSPKECKYNSYYPYIPIQGPLEEFNVYPRDNSIYKHGMPQGMASPIMYEGFGYRGHEEYGYPYVQRYGGGEYYQMQYPYGMVQAQWHQPPGFRDDDYYHSARKQQYRGGAPNSEKM.

Residues 30–89 (FVKHRKRTTKAQLKVLEETFETNIRPDANMRKKLGEQLGMTPRSVQVWFQNRRAKIKKLT) constitute a DNA-binding region (homeobox). The tract at residues 88 to 115 (LTQKKMMQQENTDNTKGPDAAHGSSSPK) is disordered. The span at 92 to 102 (KMMQQENTDNT) shows a compositional bias: polar residues.

The protein localises to the nucleus. The sequence is that of Homeobox protein HD-10 (HD-10) from Encephalitozoon cuniculi (strain GB-M1) (Microsporidian parasite).